A 256-amino-acid chain; its full sequence is Thiazole synthase (256 aa).

Lys-98 (schiff-base intermediate with DXP) is an active-site residue. Residues Gly-159, 185–186 (AG), and 207–208 (NT) contribute to the 1-deoxy-D-xylulose 5-phosphate site.

Belongs to the ThiG family. Homotetramer. Forms heterodimers with either ThiH or ThiS.

It is found in the cytoplasm. It carries out the reaction [ThiS sulfur-carrier protein]-C-terminal-Gly-aminoethanethioate + 2-iminoacetate + 1-deoxy-D-xylulose 5-phosphate = [ThiS sulfur-carrier protein]-C-terminal Gly-Gly + 2-[(2R,5Z)-2-carboxy-4-methylthiazol-5(2H)-ylidene]ethyl phosphate + 2 H2O + H(+). It functions in the pathway cofactor biosynthesis; thiamine diphosphate biosynthesis. Catalyzes the rearrangement of 1-deoxy-D-xylulose 5-phosphate (DXP) to produce the thiazole phosphate moiety of thiamine. Sulfur is provided by the thiocarboxylate moiety of the carrier protein ThiS. In vitro, sulfur can be provided by H(2)S. This is Thiazole synthase from Syntrophobacter fumaroxidans (strain DSM 10017 / MPOB).